We begin with the raw amino-acid sequence, 165 residues long: Nucleotide-binding protein Ccur92_01650 (165 aa).

It belongs to the YajQ family.

Its function is as follows. Nucleotide-binding protein. The polypeptide is Nucleotide-binding protein Ccur92_01650 (Campylobacter curvus (strain 525.92)).